Consider the following 412-residue polypeptide: Docking protein 2 (412 aa).

The PH domain maps to 4 to 114 (GAVKQGFLYL…WVQAICLLAF (111 aa)). An IRS-type PTB domain is found at 147–252 (PHKEFAVTMR…SAQKNAAPAT (106 aa)). Residues 246–296 (KNAAPATPQPQPATIPASLPRPDSPYSRPHDSLPPPSPTTPVPAPRPRGQE) are disordered. The residue at position 271 (tyrosine 271) is a Phosphotyrosine. Over residues 277 to 291 (SLPPPSPTTPVPAPR) the composition is skewed to pro residues. Tyrosine 299 and tyrosine 345 each carry phosphotyrosine. The interval 359–412 (SPQEPRGEAWRRQATADRDPAGLQHVQPAGQDFSASGWQPGTEYDNVVLKKGPK) is disordered. Basic and acidic residues predominate over residues 361–378 (QEPRGEAWRRQATADRDP).

Belongs to the DOK family. Type A subfamily. As to quaternary structure, interacts with phosphorylated RASGAP and EGFR. Interacts with RET and NCK. Interacts (via PH domain) with TEK/TIE2 (tyrosine phosphorylated). In terms of assembly, (Microbial infection) Interacts with Herpes simplex virus 1 (HHV-1) protein UL46; this interaction induces DOK2 phosphorylation and subsequent degradation. In terms of processing, on immunoreceptor stimulation, phosphorylated on C-terminal tyrosine residues. Phosphorylation on Tyr-345 is required for binding to the SH2 domain of NCK. Phosphorylation on both Tyr-271 and Tyr-299 is required for interaction with RASGAP. Phosphorylated on tyrosine residues by TEK/TIE2. In terms of tissue distribution, highly expressed in peripheral blood leukocytes, lymph nodes and spleen. Lower expression in thymus, bone marrow and fetal liver.

Functionally, DOK proteins are enzymatically inert adaptor or scaffolding proteins. They provide a docking platform for the assembly of multimolecular signaling complexes. DOK2 may modulate the cellular proliferation induced by IL-4, as well as IL-2 and IL-3. May be involved in modulating Bcr-Abl signaling. Attenuates EGF-stimulated MAP kinase activation. The chain is Docking protein 2 (DOK2) from Homo sapiens (Human).